Reading from the N-terminus, the 475-residue chain is 3-isopropylmalate dehydratase large subunit (475 aa).

[4Fe-4S] cluster is bound by residues C353, C414, and C417.

Belongs to the aconitase/IPM isomerase family. LeuC type 1 subfamily. As to quaternary structure, heterodimer of LeuC and LeuD. [4Fe-4S] cluster is required as a cofactor.

It catalyses the reaction (2R,3S)-3-isopropylmalate = (2S)-2-isopropylmalate. The protein operates within amino-acid biosynthesis; L-leucine biosynthesis; L-leucine from 3-methyl-2-oxobutanoate: step 2/4. Catalyzes the isomerization between 2-isopropylmalate and 3-isopropylmalate, via the formation of 2-isopropylmaleate. This is 3-isopropylmalate dehydratase large subunit from Stutzerimonas stutzeri (strain A1501) (Pseudomonas stutzeri).